Consider the following 872-residue polypeptide: Alanine--tRNA ligase (872 aa).

Residues His-567, His-571, Cys-669, and His-673 each coordinate Zn(2+).

This sequence belongs to the class-II aminoacyl-tRNA synthetase family. Requires Zn(2+) as cofactor.

The protein localises to the cytoplasm. The catalysed reaction is tRNA(Ala) + L-alanine + ATP = L-alanyl-tRNA(Ala) + AMP + diphosphate. Catalyzes the attachment of alanine to tRNA(Ala) in a two-step reaction: alanine is first activated by ATP to form Ala-AMP and then transferred to the acceptor end of tRNA(Ala). Also edits incorrectly charged Ser-tRNA(Ala) and Gly-tRNA(Ala) via its editing domain. The sequence is that of Alanine--tRNA ligase from Streptococcus pneumoniae serotype 4 (strain ATCC BAA-334 / TIGR4).